Here is a 105-residue protein sequence, read N- to C-terminus: Intermembrane phospholipid transport system binding protein MlaB (105 aa).

One can recognise an STAS domain in the interval 4 to 105 (WDLQKNNDKI…GLSDWIANFI (102 aa)).

The complex is composed of two ATP-binding proteins (MlaF), two transmembrane proteins (MlaE), two cytoplasmic solute-binding proteins (MlaB) and six periplasmic solute-binding proteins (MlaD).

It is found in the cytoplasm. Its function is as follows. Part of the ABC transporter complex MlaFEDB, which is involved in a phospholipid transport pathway that maintains lipid asymmetry in the outer membrane by retrograde trafficking of phospholipids from the outer membrane to the inner membrane. MlaB plays critical roles in both the assembly and activity of the complex. May act by modulating MlaF structure and stability. In Haemophilus influenzae (strain ATCC 51907 / DSM 11121 / KW20 / Rd), this protein is Intermembrane phospholipid transport system binding protein MlaB.